We begin with the raw amino-acid sequence, 196 residues long: Small ribosomal subunit protein uS5 (196 aa).

Residues 17-80 (FEEKMLFVNR…AVARKNMITV (64 aa)) enclose the S5 DRBM domain. The interval 164 to 196 (GTEVRPSLSSDSPAGRSATTEAGEGVADTGGMQ) is disordered. Polar residues predominate over residues 170 to 183 (SLSSDSPAGRSATT).

It belongs to the universal ribosomal protein uS5 family. As to quaternary structure, part of the 30S ribosomal subunit. Contacts proteins S4 and S8.

In terms of biological role, with S4 and S12 plays an important role in translational accuracy. Its function is as follows. Located at the back of the 30S subunit body where it stabilizes the conformation of the head with respect to the body. This is Small ribosomal subunit protein uS5 from Deinococcus radiodurans (strain ATCC 13939 / DSM 20539 / JCM 16871 / CCUG 27074 / LMG 4051 / NBRC 15346 / NCIMB 9279 / VKM B-1422 / R1).